Reading from the N-terminus, the 963-residue chain is Importin-13 (963 aa).

HEAT repeat units lie at residues E24–A54, P56–R88, T95–M135, A142–T179, L194–Q231, L236–S268, V276–D325, W330–L372, E375–L438, A440–I476, V487–D522, P524–C558, L562–A600, V603–F648, P676–L716, F720–F754, F761–R803, V815–L845, E860–N893, and F897–L931. Positions A45–R111 constitute an Importin N-terminal domain.

The protein belongs to the importin beta family. Interacts with UBC9, RAN, RBM8A, eIF-1A and PAX6.

It localises to the cytoplasm. The protein resides in the nucleus. In terms of biological role, functions in nuclear protein import as nuclear transport receptor. Serves as receptor for nuclear localization signals (NLS) in cargo substrates. Is thought to mediate docking of the importin/substrate complex to the nuclear pore complex (NPC) through binding to nucleoporin and the complex is subsequently translocated through the pore by an energy requiring, Ran-dependent mechanism. At the nucleoplasmic side of the NPC, Ran binds to the importin, the importin/substrate complex dissociates and importin is re-exported from the nucleus to the cytoplasm where GTP hydrolysis releases Ran. The directionality of nuclear import is thought to be conferred by an asymmetric distribution of the GTP- and GDP-bound forms of Ran between the cytoplasm and nucleus. Mediates the nuclear import of UBC9, the RBM8A/MAGOH complex, PAX6 and probably other members of the paired homeobox family. Also mediates nuclear export of eIF-1A, and the cytoplasmic release of eIF-1A is triggered by the loading of import substrates onto IPO13. This Bos taurus (Bovine) protein is Importin-13 (IPO13).